Consider the following 955-residue polypeptide: Bifunctional glutamine synthetase adenylyltransferase/adenylyl-removing enzyme (955 aa).

Residues 1–458 (MTAQAPLSVA…QFEQTFSDKQ (458 aa)) are adenylyl removase. Residues 464–955 (CAAIWHADLL…GSIDAASPTP (492 aa)) form an adenylyl transferase region.

It belongs to the GlnE family. Mg(2+) is required as a cofactor.

The catalysed reaction is [glutamine synthetase]-O(4)-(5'-adenylyl)-L-tyrosine + phosphate = [glutamine synthetase]-L-tyrosine + ADP. It catalyses the reaction [glutamine synthetase]-L-tyrosine + ATP = [glutamine synthetase]-O(4)-(5'-adenylyl)-L-tyrosine + diphosphate. In terms of biological role, involved in the regulation of glutamine synthetase GlnA, a key enzyme in the process to assimilate ammonia. When cellular nitrogen levels are high, the C-terminal adenylyl transferase (AT) inactivates GlnA by covalent transfer of an adenylyl group from ATP to specific tyrosine residue of GlnA, thus reducing its activity. Conversely, when nitrogen levels are low, the N-terminal adenylyl removase (AR) activates GlnA by removing the adenylyl group by phosphorolysis, increasing its activity. The regulatory region of GlnE binds the signal transduction protein PII (GlnB) which indicates the nitrogen status of the cell. The polypeptide is Bifunctional glutamine synthetase adenylyltransferase/adenylyl-removing enzyme (Ralstonia nicotianae (strain ATCC BAA-1114 / GMI1000) (Ralstonia solanacearum)).